We begin with the raw amino-acid sequence, 571 residues long: PR domain zinc finger protein 14 (571 aa).

At Ser-79 the chain carries Phosphoserine. The disordered stretch occupies residues 129–191 (LGHQIIGGDN…PKPSNQEGKS (63 aa)). Residues 165–176 (RTSQLLPCSPSK) are compositionally biased toward polar residues. An interaction with CBFA2T2 region spans residues 194-384 (RFQFTEEDLH…DIPVSLQVTE (191 aa)). Positions 251–367 (EGLCLMQTVF…QNQELLVWYG (117 aa)) constitute an SET domain. The C2H2-type 1; atypical zinc finger occupies 400–424 (YRCERCGKVFTYKYYRDKHLKYTPC). 5 consecutive C2H2-type zinc fingers follow at residues 432-455 (FPCSLCKRSFEKRDRLRIHILHVH), 461-483 (HKCSTCGKCFSQSSSLNKHMRVH), 489-511 (YQCVYCTKRFTASSILRTHIRQH), 517-540 (FKCKYCGKSFASHAAHDSHVRRSH), and 546-568 (CSCSICGKIFSDQETFYSHMKFH).

It belongs to the class V-like SAM-binding methyltransferase superfamily. Interacts with CBFA2T2. Expressed in embryonic stem cells. Tends to be overexpressed in breast cancer (at protein level).

It is found in the nucleus. Its function is as follows. Transcription factor that has both positive and negative roles on transcription. Required for the maintenance of embryonic stem cell identity and the reacquisition of pluripotency in somatic cells. May play an essential role in germ cell development at 2 levels: the reacquisition of potential pluripotency, including SOX2 up-regulation, and successful epigenetic reprogramming, characterized by EHMT1 repression. Its association with CBFA2T2 is required for the functions in pluripotency and germ cell formation. Directly up-regulates the expression of pluripotency gene POU5F1 through its proximal enhancer. Binds to the DNA consensus sequence 5'-GGTC[TC]CTAA-3'. This is PR domain zinc finger protein 14 (PRDM14) from Homo sapiens (Human).